A 78-amino-acid polypeptide reads, in one-letter code: Acyl carrier protein BQ2027_MB0103 (78 aa).

Residues 1 to 78 (MRDRILAAVC…ELEAVCTEFG (78 aa)) enclose the Carrier domain. Ser35 is subject to O-(pantetheine 4'-phosphoryl)serine.

It belongs to the acyl carrier protein (ACP) family. It depends on pantetheine 4'-phosphate as a cofactor.

Its pathway is lipid metabolism; fatty acid metabolism. Functionally, acyl-carrier protein (ACP) involved in the biosynthesis of a unique class of isonitrile lipopeptides (INLPs) that seem to play a role in metal acquisition. Is the dedicated ACP for the loading of activated acyl groups catalyzed by FadD10. This is Acyl carrier protein BQ2027_MB0103 from Mycobacterium bovis (strain ATCC BAA-935 / AF2122/97).